The primary structure comprises 360 residues: Phospho-N-acetylmuramoyl-pentapeptide-transferase (360 aa).

10 helical membrane passes run 26–46 (TILGVLTALGIALMIGPAVIQ), 73–93 (TMGGALILVAIAVSTLLWADL), 98–118 (VWVVLLVTLAFGLIGGVDDAL), 136–156 (LQVLAALAASTFLFATATDPV), 168–188 (WVFPLGLGFIALATLVIVGSS), 199–219 (GLAIMPTVLVATGLAVFAYAS), 235–255 (GVGELVIFCGAIVGAGLGFLW), 263–283 (VFMGDVGALALGAALGVVAVA), 288–308 (IVLFIMGGIFVMETVSVMIQV), and 338–358 (VIVRFWIITVVLVLIGLAMLK).

Belongs to the glycosyltransferase 4 family. MraY subfamily. Requires Mg(2+) as cofactor.

It localises to the cell inner membrane. It carries out the reaction UDP-N-acetyl-alpha-D-muramoyl-L-alanyl-gamma-D-glutamyl-meso-2,6-diaminopimeloyl-D-alanyl-D-alanine + di-trans,octa-cis-undecaprenyl phosphate = di-trans,octa-cis-undecaprenyl diphospho-N-acetyl-alpha-D-muramoyl-L-alanyl-D-glutamyl-meso-2,6-diaminopimeloyl-D-alanyl-D-alanine + UMP. It participates in cell wall biogenesis; peptidoglycan biosynthesis. Its function is as follows. Catalyzes the initial step of the lipid cycle reactions in the biosynthesis of the cell wall peptidoglycan: transfers peptidoglycan precursor phospho-MurNAc-pentapeptide from UDP-MurNAc-pentapeptide onto the lipid carrier undecaprenyl phosphate, yielding undecaprenyl-pyrophosphoryl-MurNAc-pentapeptide, known as lipid I. In Halorhodospira halophila (strain DSM 244 / SL1) (Ectothiorhodospira halophila (strain DSM 244 / SL1)), this protein is Phospho-N-acetylmuramoyl-pentapeptide-transferase.